Reading from the N-terminus, the 608-residue chain is Thiol:disulfide interchange protein DsbD (608 aa).

An N-terminal signal peptide occupies residues 1–22 (MKNLLSLCFLMLAAFTLNPAAA). A disulfide bridge connects residues C135 and C141. Over residues 161–173 (SAPSSDAAQQTNE) the composition is skewed to polar residues. Positions 161–180 (SAPSSDAAQQTNEGEVKKSE) are disordered. A run of 8 helical transmembrane segments spans residues 194–214 (LLTL…PCVF), 241–261 (FFYV…VAMA), 273–293 (IVLI…FGVF), 314–334 (GGSI…ASPC), 352–372 (VVLG…PLLI), 387–407 (WMNI…VFLL), 414–434 (VASQ…FYVA), and 456–476 (SLVI…LIYP). C212 and C334 are disulfide-bonded. In terms of domain architecture, Thioredoxin spans 469–608 (LAYQLIYPSS…FSAHVKSIFK (140 aa)). The cysteines at positions 522 and 525 are disulfide-linked.

The protein belongs to the thioredoxin family. DsbD subfamily.

It localises to the cell inner membrane. It carries out the reaction [protein]-dithiol + NAD(+) = [protein]-disulfide + NADH + H(+). The catalysed reaction is [protein]-dithiol + NADP(+) = [protein]-disulfide + NADPH + H(+). Required to facilitate the formation of correct disulfide bonds in some periplasmic proteins and for the assembly of the periplasmic c-type cytochromes. Acts by transferring electrons from cytoplasmic thioredoxin to the periplasm. This transfer involves a cascade of disulfide bond formation and reduction steps. In Colwellia psychrerythraea (strain 34H / ATCC BAA-681) (Vibrio psychroerythus), this protein is Thiol:disulfide interchange protein DsbD.